Consider the following 1099-residue polypeptide: MASSWRLILFLSFTSCLSEYSEALSGLSTSYAALLRIKKSSTSSAFGSKSRPRYSSPSLGTLSVSPPSWRGAAQQYHSPVNLYHSPDAFRQDESVDYGPVFVQEPDDIIFPTDSDEKKVALNCEVRGNPSPTYRWLRNGTEIDLESDYRYSMIDGTFIINNPSESRDSGLYQCLATNTFGSILSREATLQFAYLGNFSGRTRSAVSVREGQGVVLMCSPPPHSPEIIYSWVFNEFPSFVAEDSRRFISQETGNLYISKVQTSDVGSYICLVKNAVTNARVLSPPTPLTLRNDGVMGEYEPKIEVHFPTTVTAAKGTTVKMECFALGNPVPTITWMKVNGYIPSKSRLRKSQAVLEIPNLQLDDAGIYECTAENSRGKNSFRGQLQIYTYPHWVQKLNDTQLDSGSPLQWECKATGKPRPTYRWLKNGAPLLPQSRVDTANGVLAIHSVNQSDAGMYQCLAENKYGAIYASAELKILASPPSFELNQVKKSIIVTKDREVLIECKPQGSPKPAISWRKGDKAVRGNKRIAILPDGSLRILNASKADEGKYICQGVNIFGSAEIIASVSVKEPTRIELTPKRTELTVGESIVLNCKAMHDSSLDVTFYWTLKGQPIDFEKEGGHFESIRAQASSADLMIRNILLMHAGRYGCRVQTTADSVSDEAELLVRGPPGPPGVVIVEEITESTATLSWSPATDNHSPISSYNLQARSPFSLGWQTVKTVPEVITGDMESAMAVDLNPWVEYEFRVVATNPIGTGDPSIPSRMIRTNEAVPKTAPSNVSGGSGRRHELVIAWEPVSEEFQNGEGFGYIVAFRPNGTRGWKEKMVTSSDASKFIYRDESVPPLTPFEVKVGVYNNKGDGPFSQIVVICSAEGEPTAAPTDVTATSVSVSEIFVVWKHVKESLGRPQGFEIGYWKDTEPEDSAETVRTRGNESFVMLTGLEGDTLYHLTVRAYNGAGYGPPSREVSATTKRHPPSEPPGNLRWEQQGSQVSLGWEPVRPLANESEVMGYKVFYRQEGHSKGQVIETQKPQAVVPLPEAGVYIIEVRAYSEGGDGTASSQIRVPSYAGGKITSAQSTLHSLSKWSSVTLLLALMLPSSSW.

The signal sequence occupies residues 1-18 (MASSWRLILFLSFTSCLS). Ig-like C2-type domains are found at residues 99–190 (PVFV…ATLQ), 196–282 (NFSG…RVLS), 300–385 (PKIE…GQLQ), 390–474 (PHWV…AELK), 480–569 (PSFE…VSVK), and 571–660 (PTRI…DSVS). The cysteines at positions 123 and 173 are disulfide-linked. Asparagine 138 and asparagine 196 each carry an N-linked (GlcNAc...) asparagine glycan. Cystine bridges form between cysteine 217–cysteine 269 and cysteine 322–cysteine 369. Residues asparagine 397, asparagine 449, and asparagine 540 are each glycosylated (N-linked (GlcNAc...) asparagine). 3 cysteine pairs are disulfide-bonded: cysteine 411–cysteine 458, cysteine 503–cysteine 551, and cysteine 593–cysteine 650. 4 Fibronectin type-III domains span residues 673–771 (PPGV…TNEA), 776–873 (APSN…SAEG), 878–972 (APTD…TKRH), and 977–1067 (PPGN…SYAG). 3 N-linked (GlcNAc...) asparagine glycosylation sites follow: asparagine 779, asparagine 816, and asparagine 931. Residues 958 to 983 (YGPPSREVSATTKRHPPSEPPGNLRW) are disordered. A glycan (N-linked (GlcNAc...) asparagine) is linked at asparagine 1002. Serine 1072 carries the GPI-anchor amidated serine lipid modification. The propeptide at 1073 to 1099 (AQSTLHSLSKWSSVTLLLALMLPSSSW) is removed in mature form.

It belongs to the immunoglobulin superfamily. Contactin family. Interacts with PTPRG. Specifically expressed in the nervous system. Expressed in cerebrum and cerebellum but at low level in spinal cord. In brain, it is expressed in highly restricted regions at postnatal day 7, such as the auditory pathway, including the cochlear nucleus, superior olive, inferior colliculus, medial geniculate nucleus and auditory cortex. Expressed in the accessory olfactory bulb, glomerular and mitral cell layers in the olfactory bulb, anterior thalamic nuclei, layers II-IV of the cerebral cortex, dentate gyrus of the hippocampus and external granule cells and Purkinje cells of the cerebellum. Also expressed in the piriform cortex, inferior olive and facial nucleus. Weakly or not expressed in other parts of the brain.

It is found in the cell membrane. Contactins mediate cell surface interactions during nervous system development. Has some neurite outgrowth-promoting activity in the cerebral cortical neurons but not in hippocampal neurons. Probably involved in neuronal activity in the auditory system. The sequence is that of Contactin-5 (Cntn5) from Rattus norvegicus (Rat).